Here is a 1178-residue protein sequence, read N- to C-terminus: MEKNCNSVAGHAGTLVKASSRQADDKAGSRVPPGGHLLQTNKTESQLLPCASPSDPVHWTNEIVPVVADTSAPAEAAPDQTVSDGEQLTRAPDETYYQRSESLAEPPAENELPAGRSRRRRSRWCLGCGCFEQVKTVVLRMLMTGFEKYAGVVYDHPWLFIMVSLLATAGMSVGIFLRTPESDVYTLYSLSGSPSQVTKEHLLDVLPPDRLLFVLLTGTSNLVTRETVTRIDSLLQGIESITLRRDSVTTDEFNHRLVSHDRSPFPETITFQDICAKDGSGKCQVQSILDLYPSSSAWGVMPIASASWPVVTNPVTHKVSRLDAILGKITTSVRLAEQGSGRPALTVVEEAEAMLMRIDLRGETIWKPYTAAFEKLVLDYVLGQDFGPDISVTAKAERSSYDELKRVSTLDVVEWLRLCAAVLVVFLYTSVVNSSKTHRTKLVPSAMGALASLLGYLGGAGLVYLCGVRHTTPAEATPFLAIGIGVDDLFVIINAYSLTYLHPNPKERVVDAIRDAGLSITITTLTNVITFIIGALSPYYSISMFCIITAGALTWGYVLCLTFFLAGLSLDARREARKEPLSYSLFWRFMPRCCRKSSYEPQLSPPLPLTAAASGLEEMRNESEEIVTADQTPPTHGGDLLTTYQLAALMVLYKKHTCQSRSSQPARRLFDRRDGTGTEETMSTPVPEDSERDRTNQKSCGTQVSTGIVDVRETGQDAASQRRLSSHIRDMTTQESIMLLKNFEKEMEQNPEKLLKLYHPEPLGNPGRGSRRFFRDYYGRFLGNTFVKATVLVIFAAVTALAIYGATTLKFGLSLKNITPQASYLRDFYSLHEDLFPSYGDEVTVFFAENDRWEDREVQMRYLQMVKELSEQEWAVVVTDGMSLFLQHAMPSLHSGNRKEFLALLKTWLEGDPIGQNFSTFFKFSFDNLIVWQFRYWMPHRDNTTTLYYWLKEGKDIVSAGKPYFHGEVHTALAVIWESDPKILPFTLTNLSIALVCILAISLLLIPDLTSAIIVVLVVSLVDLWLFGFMALIDLPLSMISMVNLLISIGYSVDFTIHVAHTFTHCVGASRKDRMVETMIVMGAPVTHGMLSTLLSILALAGSPKYILEVFFKMMFMVIVFAYTAGMVLLPVVLTLLGPFHPHGKRESGKAIACDSSAQLIDMEPLHGTGKEEHGVGV.

A glycan (N-linked (GlcNAc...) asparagine) is linked at N41. Helical transmembrane passes span 157–177 (PWLF…GIFL) and 412–432 (VVEW…TSVV). In terms of domain architecture, SSD spans 414 to 570 (EWLRLCAAVL…LTFFLAGLSL (157 aa)). N433 carries an N-linked (GlcNAc...) asparagine glycan. Transmembrane regions (helical) follow at residues 448–468 (GALA…LCGV), 478–498 (PFLA…AYSL), 516–536 (AGLS…IGAL), and 545–565 (FCII…TFFL). N-linked (GlcNAc...) asparagine glycosylation occurs at N621. The chain crosses the membrane as a helical span at residues 789 to 809 (ATVLVIFAAVTALAIYGATTL). 2 N-linked (GlcNAc...) asparagine glycosylation sites follow: N917 and N943. Transmembrane regions (helical) follow at residues 986–1006 (FTLT…LLLI), 1013–1033 (IIVV…MALI), 1037–1057 (LSMI…DFTI), 1080–1100 (IVMG…ILAL), and 1114–1134 (MMFM…PVVL).

The protein belongs to the patched family.

It is found in the inner membrane complex. The catalysed reaction is cholesterol(in) = cholesterol(out). Likely facilitates the efflux of cholesterol and gangliosides from membranes. Plays a role in the regulation of lipid homeostasis. This chain is Niemann-Pick type C1-related protein, found in Toxoplasma gondii (strain ATCC 50611 / Me49).